We begin with the raw amino-acid sequence, 472 residues long: Zinc finger imprinted 3 (472 aa).

Residues 8–80 form the KRAB domain; the sequence is VTFEDVTVNF…EEEVLGSGRA (73 aa). 11 C2H2-type zinc fingers span residues 167 to 189, 195 to 217, 223 to 245, 251 to 273, 279 to 301, 307 to 329, 335 to 357, 363 to 385, 391 to 413, 419 to 441, and 447 to 470; these read LKCNACRKLFSSKSRLQSHLRRH, FECHSCGRAFGEKWKLDKHQKTH, YKCENCGNAYKQKSNLFQHQKMH, YQCKTCGKAFSWKSSCINHEKIH, YQCNECEKSFRQNSTLIQHKKVH, FQCTDCGKAFIYKSDLVKHQRIH, YKCSICEKAFSQKSNVIDHEKIH, YECDLCGNTFIQKKNLIQHKKIH, YECNRCGKAFFQKSNLHSHQKTH, YRCSECGKTFIRKLNLSLHKKTH, and YGCSECGKAFADRSYLVRHQKRIH.

This sequence belongs to the krueppel C2H2-type zinc-finger protein family.

It localises to the nucleus. Its function is as follows. May be involved in transcriptional regulation. In Homo sapiens (Human), this protein is Zinc finger imprinted 3 (ZIM3).